Consider the following 221-residue polypeptide: GTP cyclohydrolase III (221 aa).

It belongs to the archaeal-type GTP cyclohydrolase family.

It catalyses the reaction GTP + 3 H2O = 2-amino-5-formylamino-6-(5-phospho-D-ribosylamino)pyrimidin-4(3H)-one + 2 phosphate + 2 H(+). In terms of biological role, catalyzes the formation of 2-amino-5-formylamino-6-ribofuranosylamino-4(3H)-pyrimidinone ribonucleotide monophosphate and inorganic phosphate from GTP. Also has an independent pyrophosphate phosphohydrolase activity. The chain is GTP cyclohydrolase III from Pyrobaculum neutrophilum (strain DSM 2338 / JCM 9278 / NBRC 100436 / V24Sta) (Thermoproteus neutrophilus).